A 545-amino-acid polypeptide reads, in one-letter code: CTP synthase (545 aa).

Positions 1-266 (MATNYIFVTG…DDIVTKRFNL (266 aa)) are amidoligase domain. Position 14 (serine 14) interacts with CTP. A UTP-binding site is contributed by serine 14. ATP-binding positions include 15 to 20 (SLGKGI) and aspartate 72. Residues aspartate 72 and glutamate 140 each coordinate Mg(2+). CTP-binding positions include 147-149 (DIE), 187-192 (KTKPTQ), and lysine 223. Residues 187–192 (KTKPTQ) and lysine 223 contribute to the UTP site. An ATP-binding site is contributed by 239–241 (RDV). Residues 291–542 (TVGFVGKYVE…IEAAGEFHKE (252 aa)) enclose the Glutamine amidotransferase type-1 domain. Glycine 352 serves as a coordination point for L-glutamine. Residue cysteine 379 is the Nucleophile; for glutamine hydrolysis of the active site. L-glutamine contacts are provided by residues 380-383 (LGMQ), glutamate 403, and arginine 470. Active-site residues include histidine 515 and glutamate 517.

The protein belongs to the CTP synthase family. In terms of assembly, homotetramer.

It catalyses the reaction UTP + L-glutamine + ATP + H2O = CTP + L-glutamate + ADP + phosphate + 2 H(+). It carries out the reaction L-glutamine + H2O = L-glutamate + NH4(+). The catalysed reaction is UTP + NH4(+) + ATP = CTP + ADP + phosphate + 2 H(+). The protein operates within pyrimidine metabolism; CTP biosynthesis via de novo pathway; CTP from UDP: step 2/2. Its activity is regulated as follows. Allosterically activated by GTP, when glutamine is the substrate; GTP has no effect on the reaction when ammonia is the substrate. The allosteric effector GTP functions by stabilizing the protein conformation that binds the tetrahedral intermediate(s) formed during glutamine hydrolysis. Inhibited by the product CTP, via allosteric rather than competitive inhibition. Catalyzes the ATP-dependent amination of UTP to CTP with either L-glutamine or ammonia as the source of nitrogen. Regulates intracellular CTP levels through interactions with the four ribonucleotide triphosphates. The chain is CTP synthase from Idiomarina loihiensis (strain ATCC BAA-735 / DSM 15497 / L2-TR).